A 333-amino-acid polypeptide reads, in one-letter code: Homeobox protein engrailed-1 (333 aa).

Basic and acidic residues predominate over residues methionine 1–alanine 14. 2 disordered regions span residues methionine 1–tyrosine 184 and arginine 226–proline 247. Gly residues predominate over residues alanine 20 to aspartate 31. A compositionally biased stretch (pro residues) spans serine 38–arginine 66. Residues threonine 94–glycine 104 show a composition bias toward gly residues. Residues aspartate 144–glutamine 173 show a composition bias toward low complexity. The segment at residues aspartate 244–threonine 303 is a DNA-binding region (homeobox).

The protein belongs to the engrailed homeobox family.

The protein localises to the nucleus. Its function is as follows. Required for proper formation of the apical ectodermal ridge and correct dorsal-ventral patterning in the limb. The protein is Homeobox protein engrailed-1 (EN1) of Gallus gallus (Chicken).